A 317-amino-acid polypeptide reads, in one-letter code: Protease HtpX homolog (317 aa).

A run of 2 helical transmembrane segments spans residues 14–34 (LMGI…LYYI) and 41–61 (IALL…QWLF). Zn(2+) is bound at residue His-146. The active site involves Glu-147. His-150 contacts Zn(2+). The next 2 membrane-spanning stretches (helical) occupy residues 158 to 178 (MLLA…TLLF) and 189 to 209 (IVLL…LILA). Glu-215 provides a ligand contact to Zn(2+).

It belongs to the peptidase M48B family. It depends on Zn(2+) as a cofactor.

The protein resides in the cell membrane. In Thermoplasma acidophilum (strain ATCC 25905 / DSM 1728 / JCM 9062 / NBRC 15155 / AMRC-C165), this protein is Protease HtpX homolog.